The primary structure comprises 456 residues: uncharacterized protein (456 aa).

Positions 3–61 (TIKKNEVKTGKVIDLTHEGHGVVKVDRYPIFIPNALIDEEIKFKLIKVKKNFAIGKLIE) constitute a TRAM domain. 4 residues coordinate [4Fe-4S] cluster: cysteine 74, cysteine 80, cysteine 83, and cysteine 162. S-adenosyl-L-methionine is bound by residues glutamine 286, tyrosine 315, glutamate 336, and aspartate 384. The active-site Nucleophile is the cysteine 411.

It belongs to the class I-like SAM-binding methyltransferase superfamily. RNA M5U methyltransferase family.

This is an uncharacterized protein from Staphylococcus epidermidis (strain ATCC 12228 / FDA PCI 1200).